Here is a 319-residue protein sequence, read N- to C-terminus: Thiamine-monophosphate kinase (319 aa).

Mg(2+) is bound by residues Asp-28, Thr-43, Thr-44, and Asp-45. His-52 is a substrate binding site. A Mg(2+)-binding site is contributed by Asp-73. ATP is bound by residues Tyr-104, 121-122 (GD), and Arg-145. Mg(2+) is bound at residue Asp-122. Asp-218 is a Mg(2+) binding site. Ser-220 contacts ATP. Asp-221 serves as a coordination point for Mg(2+). The substrate site is built by Glu-268 and Tyr-315.

The protein belongs to the thiamine-monophosphate kinase family.

The enzyme catalyses thiamine phosphate + ATP = thiamine diphosphate + ADP. It participates in cofactor biosynthesis; thiamine diphosphate biosynthesis; thiamine diphosphate from thiamine phosphate: step 1/1. In terms of biological role, catalyzes the ATP-dependent phosphorylation of thiamine-monophosphate (TMP) to form thiamine-pyrophosphate (TPP), the active form of vitamin B1. The sequence is that of Thiamine-monophosphate kinase from Methanocaldococcus jannaschii (strain ATCC 43067 / DSM 2661 / JAL-1 / JCM 10045 / NBRC 100440) (Methanococcus jannaschii).